Here is a 436-residue protein sequence, read N- to C-terminus: MSNSITKNLSKHKLVKDTLVLILAGGRGSRLHELTDKRAKPALYFGGNRRIIDFALSNCINSGLNRIGVVTQYAAHSLLRHLQKGWSFLPQERGEFIDMLPARQQIDDSTWYRGTADAVYQNMAIIRDHYRPKYILILAGDHIYKQDYSQMLLDHVSSNAKCTVGCIEVPREQASEFGVMAVDENLKVKAFVEKPKDPPAIPNKPDTSLASMGIYVFDADYLYDVLMREVNTPYTSHDFGKDILPKSLEEEVLYAHPFSRSCMGRNTDGEIYWRDVGTLDSFWQSNIDLVSEHPQLDIYDQRWPIRGNPTQTYPSKFFYNKQDIKPVDNSLISGGCVITDAEISYSVLFDQVKVKADSKVEYSVVLPQVTIGKNCILRNCIIDRQVVIPDNTVIGVNIEEDRKRFRVSSTGKVILVTESMMKKLNGEKVVSEIHLD.

Alpha-D-glucose 1-phosphate is bound by residues tyrosine 112, glycine 178, 193 to 194, and serine 211; that span reads EK.

This sequence belongs to the bacterial/plant glucose-1-phosphate adenylyltransferase family. As to quaternary structure, homotetramer.

It catalyses the reaction alpha-D-glucose 1-phosphate + ATP + H(+) = ADP-alpha-D-glucose + diphosphate. Its pathway is glycan biosynthesis; glycogen biosynthesis. Involved in the biosynthesis of ADP-glucose, a building block required for the elongation reactions to produce glycogen. Catalyzes the reaction between ATP and alpha-D-glucose 1-phosphate (G1P) to produce pyrophosphate and ADP-Glc. The sequence is that of Glucose-1-phosphate adenylyltransferase from Histophilus somni (strain 129Pt) (Haemophilus somnus).